We begin with the raw amino-acid sequence, 283 residues long: Cilia- and flagella-associated protein 77 (283 aa).

The interval 151–170 is disordered; that stretch reads DQEDRRQKEPPPIPPNMTFG.

The protein belongs to the CFAP77 family. Microtubule inner protein component of sperm flagellar doublet microtubules.

The protein resides in the cytoplasm. It is found in the cytoskeleton. Its subcellular location is the cilium axoneme. The protein localises to the flagellum axoneme. In terms of biological role, microtubule inner protein (MIP) part of the dynein-decorated doublet microtubules (DMTs) in cilia axoneme, which is required for motile cilia beating. The sequence is that of Cilia- and flagella-associated protein 77 from Mus musculus (Mouse).